Here is a 105-residue protein sequence, read N- to C-terminus: Replication initiation control protein YabA (105 aa).

Residues His-79, Cys-81, Cys-95, and Cys-98 each contribute to the Zn(2+) site.

It belongs to the YabA family. In terms of assembly, homotetramer. Interacts with both DnaA and DnaN, acting as a bridge between these two proteins. Requires Zn(2+) as cofactor.

It localises to the cytoplasm. The protein resides in the nucleoid. In terms of biological role, involved in control of chromosome replication initiation. Inhibits the cooperative binding of DnaA to the oriC region, thus negatively regulating initiation of chromosome replication. Inhibits the ability of DnaA-ATP to form a helix on DNA; does not disassemble preformed DnaA-DNA helices. Decreases the residence time of DnaA on the chromosome at its binding sites (oriC, replication forks and promoter-binding sites). Tethers DnaA to the replication machinery via the DNA polymerase beta sliding clamp subunit (dnaN). Associates with oriC and other DnaA targets on the chromosome in a DnaA-dependent manner. This is Replication initiation control protein YabA from Streptococcus suis (strain 98HAH33).